Reading from the N-terminus, the 164-residue chain is Protein-export protein SecB (164 aa).

Belongs to the SecB family. Homotetramer, a dimer of dimers. One homotetramer interacts with 1 SecA dimer.

It is found in the cytoplasm. In terms of biological role, one of the proteins required for the normal export of preproteins out of the cell cytoplasm. It is a molecular chaperone that binds to a subset of precursor proteins, maintaining them in a translocation-competent state. It also specifically binds to its receptor SecA. This chain is Protein-export protein SecB, found in Herminiimonas arsenicoxydans.